The chain runs to 516 residues: MYDLITGDSIVSAEAVWDHVTMANRELAFKAGDVIKVLDASNKDWWWGQIDDEEGWFPASFVRLWVNQEDGVEEGPSDVQNGHLDPNSDCLCLGRPLQNRDQMRANVINEIMSTERHYIKHLKDICEGYLKQCRKRRDMFSDEQLKVIFGNIEDIYRFQMGFVRDLEKQYNNDDPHLSEIGPCFLEHQDGFWIYSEYCNNHLDACMELSKLMKDSRYQHFFEACRLLQQMIDIAIDGFLLTPVQKICKYPLQLAELLKYTAQDHSDYRYVAAALAVMRNVTQQINERKRRLENIDKIAQWQASVLDWEGEDILDRSSELIYTGEMAWIYQPYGRNQQRVFFLFDHQMVLCKKDLIRRDILYYKGRIDMDKYEVIDIEDGRDDDFNVSMKNAFKLHNKETEEVHLFFAKKLEEKIRWLRAFREERKMVQEDEKIGFEISENQKRQAAMTVRKASKQKGVNSARSVPPSYPPPQDPLNQGQYLVPDGIAQSQVFEFTEPKRSQSPFWQNFSRLTPFKK.

The 60-residue stretch at 8 to 67 (DSIVSAEAVWDHVTMANRELAFKAGDVIKVLDASNKDWWWGQIDDEEGWFPASFVRLWVN) folds into the SH3 domain. Positions 100–110 (RDQMRANVINE) are interaction with GPHN. Residues 103-287 (MRANVINEIM…RNVTQQINER (185 aa)) form the DH domain. In terms of domain architecture, PH spans 318–425 (ELIYTGEMAW…WLRAFREERK (108 aa)). The interval 450-480 (RKASKQKGVNSARSVPPSYPPPQDPLNQGQY) is disordered. The residue at position 502 (serine 502) is a Phosphoserine.

As to quaternary structure, interacts with GPHN. Detected in embryonic and adult brain.

It localises to the cytoplasm. The protein resides in the postsynaptic density. Acts as a guanine nucleotide exchange factor (GEF) for CDC42. Promotes formation of GPHN clusters. This chain is Rho guanine nucleotide exchange factor 9 (Arhgef9), found in Mus musculus (Mouse).